The chain runs to 337 residues: Putative F-box protein At4g09870 (337 aa).

One can recognise an F-box domain in the interval 1–46 (MSISELSQDLLEEILCRVPAISLKKLRSTCKLWNSLFIDKRVRNEL).

This chain is Putative F-box protein At4g09870, found in Arabidopsis thaliana (Mouse-ear cress).